Consider the following 711-residue polypeptide: Amino-acid racemase (711 aa).

The Cytoplasmic segment spans residues 1 to 14 (MTKNESYSGIDYFR). The helical transmembrane segment at 15 to 35 (FIAALLIVAIHTSPLFSFSET) threads the bilayer. Residues 36–37 (GN) are Extracellular-facing. A helical membrane pass occupies residues 38–58 (FIFTRIVAPVAVPFFFMTSGF). Topologically, residues 59 to 78 (FLISRYTCNAEKLGAFIKKT) are cytoplasmic. A helical membrane pass occupies residues 79-99 (TLIYGVAILLYIPINVYNGYF). Residues 100–117 (KMDNLLPNIIKDIVFDGT) lie on the Extracellular side of the membrane. The chain crosses the membrane as a helical span at residues 118 to 138 (LYHLWYLPASIIGAAIAWYLV). Topologically, residues 139-146 (KKVHYRKA) are cytoplasmic. Residues 147–167 (FLIASILYIIGLFGDSYYGIV) form a helical membrane-spanning segment. Residues 168–188 (KSVSCLNVFYNLIFQLTDYTR) lie on the Extracellular side of the membrane. Residues 189-209 (NGIFFAPIFFVLGGYISDSPN) traverse the membrane as a helical segment. Over 210–241 (RYRKKNYIRIYSLFCLMFGKTLTLQHFDIQKH) the chain is Cytoplasmic. A helical transmembrane segment spans residues 242 to 262 (DSMYVLLLPSVWCLFNLLLHF). Over 263–306 (RGKRRTGLRTISLDQLYHSSVYDCCNTIVCAELLHLQSLLVENS) the chain is Extracellular. The helical transmembrane segment at 307–327 (LVHYIAVCFASVVLAVVITAL) threads the bilayer. Residues 328-711 (LSSLKPKKAK…EHRLNIIRRA (384 aa)) are Cytoplasmic-facing. Positions 336–711 (AKHTADTDRA…EHRLNIIRRA (376 aa)) are racemase. The active-site Proton acceptor is the Lys376. Lys376 is modified (N6-(pyridoxal phosphate)lysine). Arg470 is a substrate binding site. The active-site Proton acceptor is Tyr602. Substrate is bound at residue Met651.

In the N-terminal section; belongs to the acyltransferase 3 family. This sequence in the C-terminal section; belongs to the alanine racemase family. Pyridoxal 5'-phosphate serves as cofactor.

It is found in the cell membrane. This chain is Amino-acid racemase (vanTG), found in Enterococcus faecalis (Streptococcus faecalis).